The primary structure comprises 824 residues: Leucine--tRNA ligase (824 aa).

A 'HIGH' region motif is present at residues 42–52; sequence PYPSGRIHMGH. The short motif at 581-585 is the 'KMSKS' region element; sequence KMSKS. Lys-584 lines the ATP pocket.

It belongs to the class-I aminoacyl-tRNA synthetase family.

It localises to the cytoplasm. The enzyme catalyses tRNA(Leu) + L-leucine + ATP = L-leucyl-tRNA(Leu) + AMP + diphosphate. The protein is Leucine--tRNA ligase of Geobacter sulfurreducens (strain ATCC 51573 / DSM 12127 / PCA).